A 307-amino-acid chain; its full sequence is Acetyl-coenzyme A carboxylase carboxyl transferase subunit beta (307 aa).

One can recognise a CoA carboxyltransferase N-terminal domain in the interval Val-25–Lys-294. 4 residues coordinate Zn(2+): Cys-29, Cys-32, Cys-48, and Cys-51. The C4-type zinc-finger motif lies at Cys-29–Cys-51.

Belongs to the AccD/PCCB family. As to quaternary structure, acetyl-CoA carboxylase is a heterohexamer composed of biotin carboxyl carrier protein (AccB), biotin carboxylase (AccC) and two subunits each of ACCase subunit alpha (AccA) and ACCase subunit beta (AccD). The cofactor is Zn(2+).

The protein resides in the cytoplasm. The enzyme catalyses N(6)-carboxybiotinyl-L-lysyl-[protein] + acetyl-CoA = N(6)-biotinyl-L-lysyl-[protein] + malonyl-CoA. Its pathway is lipid metabolism; malonyl-CoA biosynthesis; malonyl-CoA from acetyl-CoA: step 1/1. Component of the acetyl coenzyme A carboxylase (ACC) complex. Biotin carboxylase (BC) catalyzes the carboxylation of biotin on its carrier protein (BCCP) and then the CO(2) group is transferred by the transcarboxylase to acetyl-CoA to form malonyl-CoA. The chain is Acetyl-coenzyme A carboxylase carboxyl transferase subunit beta from Photobacterium profundum (strain SS9).